Reading from the N-terminus, the 307-residue chain is N-acetylmuramic acid 6-phosphate etherase (307 aa).

Positions 62 to 225 (IVSSFNRGGR…STASMIRIGK (164 aa)) constitute an SIS domain. E90 functions as the Proton donor in the catalytic mechanism. E121 is a catalytic residue.

It belongs to the GCKR-like family. MurNAc-6-P etherase subfamily. In terms of assembly, homodimer.

The catalysed reaction is N-acetyl-D-muramate 6-phosphate + H2O = N-acetyl-D-glucosamine 6-phosphate + (R)-lactate. It participates in amino-sugar metabolism; 1,6-anhydro-N-acetylmuramate degradation. Its pathway is amino-sugar metabolism; N-acetylmuramate degradation. It functions in the pathway cell wall biogenesis; peptidoglycan recycling. Its function is as follows. Specifically catalyzes the cleavage of the D-lactyl ether substituent of MurNAc 6-phosphate, producing GlcNAc 6-phosphate and D-lactate. Together with AnmK, is also required for the utilization of anhydro-N-acetylmuramic acid (anhMurNAc) either imported from the medium or derived from its own cell wall murein, and thus plays a role in cell wall recycling. The polypeptide is N-acetylmuramic acid 6-phosphate etherase (Pseudoalteromonas atlantica (strain T6c / ATCC BAA-1087)).